The sequence spans 293 residues: Nitrogenase iron protein (293 aa).

10 to 17 contacts ATP; that stretch reads GKGGIGKS. C98 contributes to the [4Fe-4S] cluster binding site. At R101 the chain carries ADP-ribosylarginine; by dinitrogenase reductase ADP-ribosyltransferase. Residue C133 coordinates [4Fe-4S] cluster.

It belongs to the NifH/BchL/ChlL family. As to quaternary structure, homodimer. Requires [4Fe-4S] cluster as cofactor. The reversible ADP-ribosylation of Arg-101 inactivates the nitrogenase reductase and regulates nitrogenase activity.

The enzyme catalyses N2 + 8 reduced [2Fe-2S]-[ferredoxin] + 16 ATP + 16 H2O = H2 + 8 oxidized [2Fe-2S]-[ferredoxin] + 2 NH4(+) + 16 ADP + 16 phosphate + 6 H(+). In terms of biological role, the key enzymatic reactions in nitrogen fixation are catalyzed by the nitrogenase complex, which has 2 components: the iron protein and the molybdenum-iron protein. The polypeptide is Nitrogenase iron protein (Pectobacterium atrosepticum (strain SCRI 1043 / ATCC BAA-672) (Erwinia carotovora subsp. atroseptica)).